The primary structure comprises 886 residues: Vam6/Vps39-like protein (886 aa).

One can recognise a CNH domain in the interval 15-294 (PLQIDCLAAW…RFITSGGSNI (280 aa)). Residues 573-750 (FTEDLPEVES…LLRMYLSPPS (178 aa)) form a CHCR repeat.

This sequence belongs to the VAM6/VPS39 family. In terms of assembly, homooligomer. Interacts with TGFBR2 and, less efficiently, with TGFBR1; interaction with TGFBR2 is independent of the receptor kinase activity and of the presence of TGF-beta. Also interacts with ACVR2B, but not with BMPR2. Interacts with SMAD4, preferentially following TGF-beta treatment. Component of the putative homotypic fusion and vacuole protein sorting (HOPS) complex; the core of which composed of the class C Vps proteins VPS11, VPS16, VPS18 and VPS33A, is associated with VPS39 and VPS41. Interacts with PLEKHM2; involved in VPS39 recruitment to ARL8B-containing lysosomes. Associates with adapter protein complex 3 (AP-3) and clathrin:AP-3 complexes. Interacts with STX17; this interaction is increased in the absence of TMEM39A. Interacts with RAB7, RAB2A and RAB2B. Interacts with RAB2A (GTP-bound); the interaction contributes to obtaining a functional HOPS complex that promotes autophagosome-lysosome membrane fusion driven by STX17-SNAP29-VAMP8. Interacts with RAB39A (GTP-bound) and RAB39B (GTP-bound); interaction with RAB39A contributes to obtaining a functional HOPS complex.

It localises to the cytoplasm. It is found in the lysosome membrane. The protein resides in the late endosome membrane. Its function is as follows. Regulator of TGF-beta/activin signaling, inhibiting SMAD3- and activating SMAD2-dependent transcription. Acts by interfering with SMAD3/SMAD4 complex formation, this would lead to inhibition of SMAD3-dependent transcription and relieve SMAD3 inhibition of SMAD2-dependent promoters, thus increasing SMAD2-dependent transcription. In terms of biological role, plays a role in vesicle-mediated protein trafficking to lysosomal compartments including the endocytic membrane transport and autophagic pathways. Acts as a component of the HOPS endosomal tethering complex which is proposed to be involved in the Rab5-to-Rab7 endosome conversion probably implicating MON1A/B, and via binding SNAREs and SNARE complexes to mediate tethering and docking events during SNARE-mediated membrane fusion. The HOPS complex is proposed to be recruited to Rab7 on the late endosomal membrane and to regulate late endocytic, phagocytic and autophagic traffic towards lysosomes. Involved in homotypic vesicle fusions between late endosomes and in heterotypic fusions between late endosomes and lysosomes. Required for fusion of endosomes and autophagosomes with lysosomes. The polypeptide is Vam6/Vps39-like protein (Mus musculus (Mouse)).